We begin with the raw amino-acid sequence, 485 residues long: Glucose-6-phosphate 1-dehydrogenase (485 aa).

NADP(+) contacts are provided by residues Arg46, 89-90 (DI), and Lys144. 4 residues coordinate substrate: His174, Lys178, Glu212, and Asp231. The active-site Proton acceptor is the His236. Position 334 (Lys334) interacts with substrate.

It belongs to the glucose-6-phosphate dehydrogenase family.

The catalysed reaction is D-glucose 6-phosphate + NADP(+) = 6-phospho-D-glucono-1,5-lactone + NADPH + H(+). The protein operates within carbohydrate degradation; pentose phosphate pathway; D-ribulose 5-phosphate from D-glucose 6-phosphate (oxidative stage): step 1/3. Its function is as follows. Catalyzes the oxidation of glucose 6-phosphate to 6-phosphogluconolactone. This is Glucose-6-phosphate 1-dehydrogenase from Zymomonas mobilis subsp. mobilis (strain ATCC 31821 / ZM4 / CP4).